Consider the following 203-residue polypeptide: MRLSASLFHIALVTVLLVLAGCSVTPSEDFSPINVTNAAQAKAWELQGKIAVKTSEDKFSTNLYWLHQTKANDLRLTTVLGTTVLTLKTNQGMATLDVDGKTYRDSNAQDLLTGISGWSIPLDSLPLWITGQIGSNDKIVSYNPDGTIKQLISHDPEANWVVSFLGWQQQSGAQVPRLLKIEREDVQIKIQTNQWIAVAAKTK.

A signal peptide spans 1 to 21; sequence MRLSASLFHIALVTVLLVLAG. Residue cysteine 22 is the site of N-palmitoyl cysteine attachment. Cysteine 22 carries the S-diacylglycerol cysteine lipid modification.

This sequence belongs to the LolB family. In terms of assembly, monomer.

It localises to the cell outer membrane. Its function is as follows. Plays a critical role in the incorporation of lipoproteins in the outer membrane after they are released by the LolA protein. This Shewanella frigidimarina (strain NCIMB 400) protein is Outer-membrane lipoprotein LolB.